The primary structure comprises 504 residues: MTVPALASASGLLQVASLLGLLLLLLKAAQLYLHRQWLLKALQQFPSPPSHWLYGHSREFQEESELPPLLKRVEKYPSACALWRWGTRAMVLVYDPDYMKVVLARSDPKNSVVYRLLIPWIGCGLLLLNGQTWFQRRRMLTPAFHYDILKPYVGLMAKSVQVMLDKWEQLVAQDPRLEIVGPVSLMTLDTIMKCAFSHQGSAQTDGDSHSYIQAIWDLKNLFSIRTKSAFLQNDIIYRLSPEGRKNHRAARIAHQHTDRVIQLRKAQLQKQGEMENVRKKRHLDFLDILLLARMEKGNSLSDTDLRAEVDTFMFEGHDTTASGISWILYALASHPEHQQRCREEIQGLLGDGTSITWDHLDQMPYTTMCIKEALRLYPPVPGVSRELSKPITFPDGRSLPAGITLSLSIYGLHHNPQVWPNPEEFDPSRFAPGSARHSHAFMPFSGGSRNCIGKQFAMNEMKVAVALTLLRFELAPDPSRKPIATPEVVLNSKNGIHLKLRKLP.

The next 2 membrane-spanning stretches (helical) occupy residues L6 to L26 and V112 to T132. Position 451 (C451) interacts with heme.

This sequence belongs to the cytochrome P450 family. It depends on heme as a cofactor.

The protein resides in the endoplasmic reticulum membrane. It catalyses the reaction an omega-methyl-long-chain fatty acid + reduced [NADPH--hemoprotein reductase] + O2 = an omega-hydroxy-long-chain fatty acid + oxidized [NADPH--hemoprotein reductase] + H2O + H(+). Catalyzes the omega- and (omega-1)-hydroxylation of various fatty acids such as laurate and palmitate. Has no activity toward taurochenodeoxycholic acid. This Sus scrofa (Pig) protein is Cytochrome P450 4A24 (CYP4A24).